A 610-amino-acid chain; its full sequence is Elongation factor 4 (610 aa).

One can recognise a tr-type G domain in the interval 11–193 (ENIRNFSIIA…QIVEKVPAPS (183 aa)). GTP is bound by residues 23-28 (DHGKST) and 140-143 (NKID).

This sequence belongs to the TRAFAC class translation factor GTPase superfamily. Classic translation factor GTPase family. LepA subfamily.

The protein resides in the cell membrane. It catalyses the reaction GTP + H2O = GDP + phosphate + H(+). Required for accurate and efficient protein synthesis under certain stress conditions. May act as a fidelity factor of the translation reaction, by catalyzing a one-codon backward translocation of tRNAs on improperly translocated ribosomes. Back-translocation proceeds from a post-translocation (POST) complex to a pre-translocation (PRE) complex, thus giving elongation factor G a second chance to translocate the tRNAs correctly. Binds to ribosomes in a GTP-dependent manner. This Streptococcus equi subsp. zooepidemicus (strain MGCS10565) protein is Elongation factor 4.